We begin with the raw amino-acid sequence, 37 residues long: Large ribosomal subunit protein bL36c (37 aa).

The protein belongs to the bacterial ribosomal protein bL36 family.

It is found in the plastid. The protein resides in the chloroplast. This is Large ribosomal subunit protein bL36c from Ostreococcus tauri.